The following is a 161-amino-acid chain: Chaperone protein dnaJ 11, chloroplastic (161 aa).

Low complexity predominate over residues 1–18 (MLSSSPTSFTHPFLSSSP). Residues 1–31 (MLSSSPTSFTHPFLSSSPPLSPISPPSRTAR) are disordered. The N-terminal 36 residues, 1 to 36 (MLSSSPTSFTHPFLSSSPPLSPISPPSRTARISPPL), are a transit peptide targeting the chloroplast. The J domain occupies 65–133 (SLYDVLEVPL…EKRSVYDRRM (69 aa)).

This sequence belongs to the DnaJ family. C/III subfamily. As to expression, expressed in roots, stems, leaves, flowers and developing siliques.

It localises to the plastid. The protein resides in the chloroplast stroma. Plays a continuous role in plant development probably in the structural organization of compartments. The polypeptide is Chaperone protein dnaJ 11, chloroplastic (ATJ11) (Arabidopsis thaliana (Mouse-ear cress)).